Consider the following 854-residue polypeptide: Disrupted in schizophrenia 1 protein (854 aa).

The segment covering 1–18 has biased composition (gly residues); it reads MPGGGPQGAPAAAGGGGV. 4 disordered regions span residues 1-24, 179-205, 221-257, and 278-323; these read MPGG…RAGS, SAEL…SHSA, GERG…GPHE, and AQAA…SGDA. The interaction with MAP1A stretch occupies residues 1–292; the sequence is MPGGGPQGAP…NSSRPERDMH (292 aa). Positions 197–203 match the Interaction with FBXW7 motif; the sequence is PTPPGSH. Over residues 285–295 the composition is skewed to basic and acidic residues; that stretch reads SRPERDMHSLP. Residues 293–696 form an interaction with TRAF3IP1 region; that stretch reads SLPDMDPGSS…LGKVWEADLE (404 aa). Over residues 296 to 309 the composition is skewed to low complexity; it reads DMDPGSSSSLDPSL. 3 coiled-coil regions span residues 366 to 394, 452 to 505, and 602 to 666; these read ENDD…HFQL, ITRR…CDLT, and WTAK…SVKE. Lysine 372 is covalently cross-linked (Glycyl lysine isopeptide (Lys-Gly) (interchain with G-Cter in ubiquitin)). A required for localization to punctate cytoplasmic foci region spans residues 440–597; the sequence is LEPTAQDSLH…LLEAKMHAIS (158 aa). Residues 446 to 854 form a necessary and sufficient for interaction with PCNT and localization at the centrosome region; the sequence is DSLHVSITRR…MTAGVHEAQA (409 aa). Positions 598–854 are interaction with ATF4 and ATF5; that stretch reads GNHFWTAKDL…MTAGVHEAQA (257 aa). Positions 716–739 are disordered; the sequence is VEDERQMDDLEGAAPPIPPRLHSE. The segment at 727–854 is interaction with PAFAH1B1; it reads GAAPPIPPRL…MTAGVHEAQA (128 aa). Residues 802–830 adopt a coiled-coil conformation; sequence SHDEDLIQSLRRELQMVKETLQAMILQLQ. The segment at 802-835 is interaction with NDEL1; sequence SHDEDLIQSLRRELQMVKETLQAMILQLQPAKEA.

Interacts with NDEL1. Interacts with CCDC88A (via C-terminus); the interaction is direct. Interacts with GSK3B. Interacts with tubulin alpha, ACTN2, ANKHD1, ATF4, ATF5, CEP63, EIF3S3, MAP1A, NDEL1, PAFAH1B1, RANBP9, SPTBN4, SYNE1 and TRAF3IP1. Interaction with microtubules may be mediated in part by TRAF3IP1. Interacts (via C-terminal) with PCNT. Interacts with CHCHD6. Interacts with CCDC141. Interacts with FBXW7, the substrate-recognition component of a SCF (SKP1-CUL1-F-box protein) E3 ubiquitin-protein ligase complex; the interaction targets DISC1 for proteasomal degradation. Interacts with ZNF365. Interacts with ATF4; inhibiting ATF4 transcription factor activity by disrupting ATF4 dimerization and DNA-binding. Interacts with PDE4B (isoform PDE4B5). Post-translationally, ubiquitinated. Ubiquitination with 'Lys-48'-linked polyubiquitin chains leads to its proteasomal degradation. As to expression, ubiquitous. Highly expressed in the dentate gyrus of the hippocampus. Also expressed in the temporal and parahippocampal cortices and cells of the white matter.

Its subcellular location is the cytoplasm. The protein localises to the cytoskeleton. The protein resides in the mitochondrion. It is found in the microtubule organizing center. It localises to the centrosome. Its subcellular location is the postsynaptic density. Involved in the regulation of multiple aspects of embryonic and adult neurogenesis. Required for neural progenitor proliferation in the ventrical/subventrical zone during embryonic brain development and in the adult dentate gyrus of the hippocampus. Participates in the Wnt-mediated neural progenitor proliferation as a positive regulator by modulating GSK3B activity and CTNNB1 abundance. Plays a role as a modulator of the AKT-mTOR signaling pathway controlling the tempo of the process of newborn neurons integration during adult neurogenesis, including neuron positioning, dendritic development and synapse formation. Inhibits the activation of AKT-mTOR signaling upon interaction with CCDC88A. Regulates the migration of early-born granule cell precursors toward the dentate gyrus during the hippocampal development. Inhibits ATF4 transcription factor activity in neurons by disrupting ATF4 dimerization and DNA-binding. Plays a role, together with PCNT, in the microtubule network formation. In Homo sapiens (Human), this protein is Disrupted in schizophrenia 1 protein.